Consider the following 207-residue polypeptide: Outer-membrane lipoprotein LolB (207 aa).

The N-terminal stretch at 1–21 (MPLPDFRLIRLLPLAALVLTA) is a signal peptide. Residue Cys22 is the site of N-palmitoyl cysteine attachment. Residue Cys22 is the site of S-diacylglycerol cysteine attachment.

Belongs to the LolB family. Monomer.

Its subcellular location is the cell outer membrane. Its function is as follows. Plays a critical role in the incorporation of lipoproteins in the outer membrane after they are released by the LolA protein. The sequence is that of Outer-membrane lipoprotein LolB from Shigella boydii serotype 18 (strain CDC 3083-94 / BS512).